Here is a 304-residue protein sequence, read N- to C-terminus: Killer cell immunoglobulin-like receptor 2DS5 (304 aa).

The N-terminal stretch at 1-21 (MSLMVISMACVAFFLLQGAWP) is a signal peptide. The Extracellular portion of the chain corresponds to 22–245 (HEGFRRKPSL…SETGNPRHLH (224 aa)). Ig-like C2-type domains lie at 42–107 (EETV…VTHS) and 142–205 (GESV…FRDS). 2 disulfides stabilise this stretch: Cys-49/Cys-100 and Cys-149/Cys-198. 4 N-linked (GlcNAc...) asparagine glycosylation sites follow: Asn-67, Asn-84, Asn-178, and Asn-223. Residues 246-264 (VLIGTSVVKLPFTILLFFL) form a helical membrane-spanning segment. Topologically, residues 265–304 (LHRWCSNKKNASVMDQGPAGNRTVNREDSDEQDHQEVSYA) are cytoplasmic. A disordered region spans residues 275–304 (ASVMDQGPAGNRTVNREDSDEQDHQEVSYA). The segment covering 288-304 (VNREDSDEQDHQEVSYA) has biased composition (basic and acidic residues).

The protein belongs to the immunoglobulin superfamily. Interacts with TYROBP. Post-translationally, N-glycosylated, glycosylation varies depending on the allele which alters cell surface expression levels. Expressed on a discrete subset of peripheral blood NK cells.

The protein resides in the cell membrane. Its function is as follows. Activating natural killer (NK) receptor that recognizes C2 epitopes of HLA-C alleles. Bridging the innate and adaptive immune systems, NK cells express a number of cell surface receptors which either inhibit or stimulate their cytotoxicity. Able to activate NK cells citotoxicity and cytokine production such as IFNG. Receptor functions are attenuated even lost in some alleles, such as KIR2DS5*002 represented in this entry. The sequence is that of Killer cell immunoglobulin-like receptor 2DS5 from Homo sapiens (Human).